A 366-amino-acid chain; its full sequence is Cell division protein FtsZ 1 (366 aa).

Residues 45 to 49 (GAGCN), 132 to 134 (GTG), Glu163, Arg167, and Asp210 contribute to the GTP site. Residues 344-354 (PEEETPLETPE) show a composition bias toward acidic residues. A disordered region spans residues 344–366 (PEEETPLETPEESPSIEISIPEL). Over residues 355–366 (ESPSIEISIPEL) the composition is skewed to low complexity.

It belongs to the FtsZ family. As to quaternary structure, homodimer. Polymerizes to form a dynamic ring structure in a strictly GTP-dependent manner. Interacts directly with several other division proteins.

Its subcellular location is the cytoplasm. Essential cell division protein that forms a contractile ring structure (Z ring) at the future cell division site. The regulation of the ring assembly controls the timing and the location of cell division. One of the functions of the FtsZ ring is to recruit other cell division proteins to the septum to produce a new cell wall between the dividing cells. Binds GTP and shows GTPase activity. The sequence is that of Cell division protein FtsZ 1 from Pyrococcus woesei.